Consider the following 1202-residue polypeptide: Protein jagged-2 (1202 aa).

Over 1–1037 the chain is Extracellular; sequence GACCDGDGRT…ETVVMGGSST (1037 aa). A glycan (N-linked (GlcNAc...) asparagine) is linked at Asn-107. A DSL domain is found at 150-194; sequence VRCDENYYSATCNKFCRPRNDFFGHYTCDQYGNKACMDGWMGKEC. 42 cysteine pairs are disulfide-bonded: Cys-152/Cys-161, Cys-165/Cys-177, Cys-185/Cys-194, Cys-199/Cys-210, Cys-203/Cys-216, Cys-218/Cys-227, Cys-230/Cys-241, Cys-236/Cys-247, Cys-249/Cys-258, Cys-265/Cys-277, Cys-271/Cys-287, Cys-289/Cys-298, Cys-305/Cys-316, Cys-310/Cys-325, Cys-327/Cys-336, Cys-343/Cys-354, Cys-348/Cys-363, Cys-365/Cys-374, Cys-381/Cys-392, Cys-386/Cys-401, Cys-403/Cys-412, Cys-419/Cys-429, Cys-423/Cys-438, Cys-440/Cys-449, Cys-456/Cys-467, Cys-461/Cys-476, Cys-478/Cys-487, Cys-495/Cys-506, Cys-500/Cys-515, Cys-517/Cys-526, Cys-544/Cys-567, Cys-561/Cys-577, Cys-579/Cys-588, Cys-595/Cys-606, Cys-600/Cys-615, Cys-617/Cys-626, Cys-633/Cys-644, Cys-638/Cys-653, Cys-655/Cys-664, Cys-671/Cys-682, Cys-676/Cys-691, and Cys-693/Cys-702. The EGF-like 1 domain occupies 195–228; it reads KEAVCKQGCNLLHGGCTVPGECRCSYGWQGKFCD. One can recognise an EGF-like 2; atypical domain in the interval 229–259; sequence ECVPYPGCVHGSCVEPWHCDCETNWGGLLCD. 2 EGF-like domains span residues 261–299 and 301–337; these read DLNY…KNCE and AEHA…PTCA. The region spanning 339–375 is the EGF-like 5; calcium-binding domain; that stretch reads DIDECASNPCAAGGTCVDQVDGFECICPEQWVGATCQ. The region spanning 377-413 is the EGF-like 6; calcium-binding domain; that stretch reads DANECEGKPCLNAFSCKNLIGGYYCDCLPGWKGANCH. The EGF-like 7; calcium-binding domain maps to 415–450; it reads NINDCHGQCQHGGTCKDLVNGYQCVCPRGFGGRHCE. 2 consecutive EGF-like domains span residues 452 to 488 and 490 to 527; these read EYYK…PLCE and DVDL…KNCS. A glycan (N-linked (GlcNAc...) asparagine) is linked at Asn-525. The 61-residue stretch at 529 to 589 folds into the EGF-like 10; atypical domain; the sequence is PRETCPGGAC…DSGFTGTYCH (61 aa). N-linked (GlcNAc...) asparagine glycosylation is present at Asn-574. Positions 591–627 constitute an EGF-like 11; calcium-binding domain; the sequence is NIDDCMGQPCRNGGTCIDEVDSFACFCPSGWEGELCD. The EGF-like 12; calcium-binding domain maps to 629 to 665; it reads NPNDCLPDPCHSRGRCYDLVNDFYCVCDDGWKDKTCH. EGF-like domains lie at 667-703 and 706-742; these read REFQ…STCT and KNSS…RTCT. Asn-707 is a glycosylation site (N-linked (GlcNAc...) asparagine). 9 disulfide bridges follow: Cys-710-Cys-721, Cys-715-Cys-730, Cys-732-Cys-741, Cys-748-Cys-759, Cys-753-Cys-768, Cys-770-Cys-779, Cys-786-Cys-797, Cys-791-Cys-806, and Cys-808-Cys-817. Positions 744–780 constitute an EGF-like 15; calcium-binding domain; the sequence is NTNDCNPLPCYNGGICVDGVNWFRCECAPGFAGPDCR. In terms of domain architecture, EGF-like 16; calcium-binding spans 782-818; sequence NIDECQSSPCAYGATCVDEINGYRCSCPPGRSGPRCQ. A glycan (N-linked (GlcNAc...) asparagine) is linked at Asn-1015. Residues 1038–1058 traverse the membrane as a helical segment; it reads GLLVPVLCSVFSVLWLACMVI. The Cytoplasmic segment spans residues 1059–1202; the sequence is CVWWTRKRRK…TKDVRCAGRE (144 aa). Composition is skewed to basic and acidic residues over residues 1070–1080, 1147–1159, and 1185–1202; these read RERSRLPRDES, LSRG…RSRE, and VDNR…AGRE. The disordered stretch occupies residues 1070–1202; it reads RERSRLPRDE…TKDVRCAGRE (133 aa). The residue at position 1080 (Ser-1080) is a Phosphoserine.

The protein localises to the membrane. Functionally, putative Notch ligand involved in the mediation of Notch signaling. May have a role in neurogenesis in the peripheral nervous system, limb development and in the adult brain. The sequence is that of Protein jagged-2 (Jag2) from Rattus norvegicus (Rat).